The sequence spans 701 residues: CRS2-associated factor 1, chloroplastic (701 aa).

The transit peptide at 1–77 (MATSHLTSRS…ENGEPAAGVR (77 aa)) directs the protein to the chloroplast. CRM domains lie at 183-279 (EPLT…TRPI) and 301-397 (DGLT…LPPL). Residues 581–603 (GILLLFKQAIDSGMALVLNENEF) are CRS2 binding.

As to quaternary structure, interacts with CRS2 and RNA. Part of large ribonucleo-protein complexes that include group IIB introns, CRS2 and CAF1.

The protein resides in the plastid. Its subcellular location is the chloroplast stroma. Required for the splicing of group IIB introns in chloroplasts. Forms splicing particles with CRS2. Interacts with RNA and confers intron specificity of the splicing particles. The protein is CRS2-associated factor 1, chloroplastic of Oryza sativa subsp. japonica (Rice).